We begin with the raw amino-acid sequence, 198 residues long: Small ribosomal subunit protein uS4z (198 aa).

Serine 68 is subject to Phosphoserine. An S4 RNA-binding domain is found at 109–180 (RRLQTIVFKS…PGRVKRRNEK (72 aa)). Residues 163–198 (TSPFGGGRPGRVKRRNEKSASKKASGGGDADGDDEE) are disordered.

Belongs to the universal ribosomal protein uS4 family. In terms of assembly, binds to the translation initiation factors TIF3E1.

The polypeptide is Small ribosomal subunit protein uS4z (RPS9B) (Arabidopsis thaliana (Mouse-ear cress)).